Consider the following 98-residue polypeptide: Integration host factor subunit alpha (98 aa).

Belongs to the bacterial histone-like protein family. In terms of assembly, heterodimer of an alpha and a beta chain.

This protein is one of the two subunits of integration host factor, a specific DNA-binding protein that functions in genetic recombination as well as in transcriptional and translational control. This Glaesserella parasuis serovar 5 (strain SH0165) (Haemophilus parasuis) protein is Integration host factor subunit alpha.